The chain runs to 279 residues: Secreted RxLR effector protein 152 (279 aa).

The N-terminal stretch at 1-22 (MRNGSVLFGLFFIGHSCSVLLA) is a signal peptide. Positions 47 to 62 (RTLQADDSERTLAEER) match the RxLR-dEER motif.

The protein belongs to the RxLR effector family.

It is found in the secreted. Its subcellular location is the host nucleus. Functionally, secreted effector that completely suppresses the host cell death induced by cell death-inducing proteins. In Plasmopara viticola (Downy mildew of grapevine), this protein is Secreted RxLR effector protein 152.